The following is a 146-amino-acid chain: Large ribosomal subunit protein uL24z (146 aa).

Disordered regions lie at residues 1 to 26 and 121 to 146; these read MKYN…SSER and KAKG…QNVD. Basic residues predominate over residues 9–18; it reads SSRRKNRKAH. A compositionally biased stretch (basic and acidic residues) spans 121 to 138; that stretch reads KAKGRAAADKEKGTKFTS.

Belongs to the universal ribosomal protein uL24 family.

This chain is Large ribosomal subunit protein uL24z (RPL26A), found in Arabidopsis thaliana (Mouse-ear cress).